The primary structure comprises 61 residues: Small ribosomal subunit protein uS14 (61 aa).

The Zn(2+) site is built by Cys-24, Cys-27, Cys-40, and Cys-43.

Belongs to the universal ribosomal protein uS14 family. Zinc-binding uS14 subfamily. In terms of assembly, part of the 30S ribosomal subunit. Contacts proteins S3 and S10. The cofactor is Zn(2+).

Binds 16S rRNA, required for the assembly of 30S particles and may also be responsible for determining the conformation of the 16S rRNA at the A site. This is Small ribosomal subunit protein uS14 from Caldicellulosiruptor bescii (strain ATCC BAA-1888 / DSM 6725 / KCTC 15123 / Z-1320) (Anaerocellum thermophilum).